A 342-amino-acid polypeptide reads, in one-letter code: GTPase Obg (342 aa).

The region spanning 1 to 159 is the Obg domain; sequence MKFLDLCKVY…RTIWLRLKLI (159 aa). In terms of domain architecture, OBG-type G spans 160 to 327; it reads ADAGLLGLPN…VLRALWAEID (168 aa). Residues 166-173, 191-195, 212-215, 279-282, and 308-310 each bind GTP; these read GLPNAGKS, FTTLV, DIPG, NKID, and SGV. The Mg(2+) site is built by S173 and T193.

The protein belongs to the TRAFAC class OBG-HflX-like GTPase superfamily. OBG GTPase family. Monomer. Mg(2+) is required as a cofactor.

It localises to the cytoplasm. Its function is as follows. An essential GTPase which binds GTP, GDP and possibly (p)ppGpp with moderate affinity, with high nucleotide exchange rates and a fairly low GTP hydrolysis rate. Plays a role in control of the cell cycle, stress response, ribosome biogenesis and in those bacteria that undergo differentiation, in morphogenesis control. This is GTPase Obg from Cereibacter sphaeroides (strain KD131 / KCTC 12085) (Rhodobacter sphaeroides).